A 167-amino-acid chain; its full sequence is Phosphopantetheine adenylyltransferase (167 aa).

Position 10 (Ser-10) interacts with substrate. ATP-binding positions include 10–11 and His-18; that span reads SF. Substrate-binding residues include Lys-42, Ala-79, and Arg-93. ATP-binding positions include 94 to 96, Glu-104, and 129 to 135; these read GLR and VRHITAT.

The protein belongs to the bacterial CoaD family. Homohexamer. The cofactor is Mg(2+).

It is found in the cytoplasm. It catalyses the reaction (R)-4'-phosphopantetheine + ATP + H(+) = 3'-dephospho-CoA + diphosphate. Its pathway is cofactor biosynthesis; coenzyme A biosynthesis; CoA from (R)-pantothenate: step 4/5. Functionally, reversibly transfers an adenylyl group from ATP to 4'-phosphopantetheine, yielding dephospho-CoA (dPCoA) and pyrophosphate. This chain is Phosphopantetheine adenylyltransferase, found in Beijerinckia indica subsp. indica (strain ATCC 9039 / DSM 1715 / NCIMB 8712).